The primary structure comprises 677 residues: Methionine--tRNA ligase (677 aa).

Residues 15 to 25 (PYANGSIHLGH) carry the 'HIGH' region motif. 4 residues coordinate Zn(2+): C146, C149, C159, and C162. The short motif at 333–337 (KMSKS) is the 'KMSKS' region element. K336 is a binding site for ATP. In terms of domain architecture, tRNA-binding spans 575-677 (DFAKIDLRVA…DGAKPGQQVK (103 aa)).

Belongs to the class-I aminoacyl-tRNA synthetase family. MetG type 1 subfamily. As to quaternary structure, homodimer. Zn(2+) is required as a cofactor.

It localises to the cytoplasm. It catalyses the reaction tRNA(Met) + L-methionine + ATP = L-methionyl-tRNA(Met) + AMP + diphosphate. Its function is as follows. Is required not only for elongation of protein synthesis but also for the initiation of all mRNA translation through initiator tRNA(fMet) aminoacylation. This Salmonella typhi protein is Methionine--tRNA ligase.